The following is a 359-amino-acid chain: Alpha-ketoglutarate-dependent dioxygenase cnsM (359 aa).

H120 provides a ligand contact to substrate. Fe cation contacts are provided by H158 and D160. Residue T186 coordinates 2-oxoglutarate. H311 is a binding site for Fe cation. 2-oxoglutarate-binding residues include R323 and R327. R327 contacts substrate.

This sequence belongs to the TfdA dioxygenase family. Requires Fe(2+) as cofactor.

It functions in the pathway alkaloid biosynthesis. In terms of biological role, alpha-ketoglutarate-dependent dioxygenase; part of the gene cluster that mediates the biosynthesis of communesins, a prominent class of indole alkaloids with great potential as pharmaceuticals. Communesins are biosynthesized by the coupling of tryptamine and aurantioclavine, two building blocks derived from L-tryptophan. The L-tryptophan decarboxylase cnsB converts L-tryptophan to tryptamine, whereas the tryptophan dimethylallyltransferase cnsF converts L-tryptophan to 4-dimethylallyl tryptophan which is further transformed to aurantioclavine by the aurantioclavine synthase cnsA, probably aided by the catalase cnsD. The cytochrome P450 monooxygenase cnsC catalyzes the heterodimeric coupling between the two different indole moieties, tryptamine and aurantioclavine, to construct vicinal quaternary stereocenters and yield the heptacyclic communesin scaffold. The O-methyltransferase cnsE then methylates the communesin scaffold to produce communesin K, the simplest characterized communesin that contains the heptacyclic core. The dioxygenase cnsJ converts communesin K into communesin I. Acylation to introduce the hexadienyl group at position N16 of communesin I by the acyltransferase cnsK leads to the production of communesin B. The hexadienyl group is produced by the highly reducing polyketide synthase cnsI, before being hydrolytically removed from cnsI by the serine hydrolase cnsH, converted into hexadienyl-CoA by the CoA ligase cnsG, and then transferred to communesin I by cnsK. Surprisingly, cnsK may also be a promiscuous acyltransferase that can tolerate a range of acyl groups, including acetyl-, propionyl-, and butyryl-CoA, which lead to communesins A, G and H respectively. The roles of the alpha-ketoglutarate-dependent dioxygenases cnsM and cnsP have still to be determined. This Penicillium expansum (Blue mold rot fungus) protein is Alpha-ketoglutarate-dependent dioxygenase cnsM.